The sequence spans 186 residues: Tumor necrosis factor, alpha-induced protein 8-like protein 2 A (186 aa).

The protein belongs to the TNFAIP8 family. TNFAIP8L2 subfamily.

Functionally, acts as a negative regulator of innate and adaptive immunity by maintaining immune homeostasis. Negative regulator of Toll-like receptor and T-cell receptor function. Prevents hyperresponsiveness of the immune system and maintains immune homeostasis. Inhibits jun/ap1 and NF-kappa-B activation. Promotes Fas-induced apoptosis. The polypeptide is Tumor necrosis factor, alpha-induced protein 8-like protein 2 A (tnfaip8l2a) (Danio rerio (Zebrafish)).